The chain runs to 717 residues: Polyribonucleotide nucleotidyltransferase (717 aa).

The Mg(2+) site is built by aspartate 496 and aspartate 502. One can recognise a KH domain in the interval 563 to 622 (PRLLSFKIDPEMIGLVIGPGGKTIKGITEETGVKIDIDDDGTVTIAAADGEKAKQACNII). The 69-residue stretch at 632–700 (GDVYVGRVTR…SKGRVNLTRL (69 aa)) folds into the S1 motif domain.

Belongs to the polyribonucleotide nucleotidyltransferase family. Mg(2+) serves as cofactor.

The protein localises to the cytoplasm. The catalysed reaction is RNA(n+1) + phosphate = RNA(n) + a ribonucleoside 5'-diphosphate. Involved in mRNA degradation. Catalyzes the phosphorolysis of single-stranded polyribonucleotides processively in the 3'- to 5'-direction. In Trichodesmium erythraeum (strain IMS101), this protein is Polyribonucleotide nucleotidyltransferase.